A 372-amino-acid polypeptide reads, in one-letter code: N-methyl-L-tryptophan oxidase (372 aa).

Residue 4-34 (DLIIIGSGSVGAAAGYYATRAGLKVLMTDAH) coordinates FAD. An S-8alpha-FAD cysteine modification is found at C307.

It belongs to the MSOX/MTOX family. MTOX subfamily. In terms of assembly, monomer. It depends on FAD as a cofactor.

It carries out the reaction N(alpha)-methyl-L-tryptophan + O2 + H2O = L-tryptophan + formaldehyde + H2O2. Catalyzes the oxidative demethylation of N-methyl-L-tryptophan. The polypeptide is N-methyl-L-tryptophan oxidase (Salmonella typhimurium (strain LT2 / SGSC1412 / ATCC 700720)).